Here is a 185-residue protein sequence, read N- to C-terminus: Peptidyl-tRNA hydrolase (185 aa).

Y14 serves as a coordination point for tRNA. H19 acts as the Proton acceptor in catalysis. Residues F64, N66, and N112 each coordinate tRNA.

This sequence belongs to the PTH family. In terms of assembly, monomer.

The protein localises to the cytoplasm. The enzyme catalyses an N-acyl-L-alpha-aminoacyl-tRNA + H2O = an N-acyl-L-amino acid + a tRNA + H(+). Hydrolyzes ribosome-free peptidyl-tRNAs (with 1 or more amino acids incorporated), which drop off the ribosome during protein synthesis, or as a result of ribosome stalling. Its function is as follows. Catalyzes the release of premature peptidyl moieties from peptidyl-tRNA molecules trapped in stalled 50S ribosomal subunits, and thus maintains levels of free tRNAs and 50S ribosomes. The chain is Peptidyl-tRNA hydrolase from Lacticaseibacillus paracasei (strain ATCC 334 / BCRC 17002 / CCUG 31169 / CIP 107868 / KCTC 3260 / NRRL B-441) (Lactobacillus paracasei).